Here is a 101-residue protein sequence, read N- to C-terminus: Small ribosomal subunit protein uS14 (101 aa).

The tract at residues 1–20 is disordered; sequence MAKTSAVEKNKRRRKLVANH. Positions 10–20 are enriched in basic residues; it reads NKRRRKLVANH.

It belongs to the universal ribosomal protein uS14 family. As to quaternary structure, part of the 30S ribosomal subunit. Contacts proteins S3 and S10.

Functionally, binds 16S rRNA, required for the assembly of 30S particles and may also be responsible for determining the conformation of the 16S rRNA at the A site. The sequence is that of Small ribosomal subunit protein uS14 from Sinorhizobium medicae (strain WSM419) (Ensifer medicae).